We begin with the raw amino-acid sequence, 230 residues long: 2-phytyl-1,4-naphtoquinone methyltransferase (230 aa).

This sequence belongs to the class I-like SAM-binding methyltransferase superfamily. MenG/UbiE family.

It catalyses the reaction demethylphylloquinol + S-adenosyl-L-methionine = phylloquinol + S-adenosyl-L-homocysteine + H(+). The protein operates within cofactor biosynthesis; phylloquinone biosynthesis. Functionally, methyltransferase required for the conversion of 2-phytyl-1,4-beta-naphthoquinol to phylloquinol. In Nostoc punctiforme (strain ATCC 29133 / PCC 73102), this protein is 2-phytyl-1,4-naphtoquinone methyltransferase.